Here is a 509-residue protein sequence, read N- to C-terminus: Maturase K (509 aa).

Belongs to the intron maturase 2 family. MatK subfamily.

It is found in the plastid. Its subcellular location is the chloroplast. Functionally, usually encoded in the trnK tRNA gene intron. Probably assists in splicing its own and other chloroplast group II introns. The protein is Maturase K of Thujopsis dolabrata (Hiba arborvitae).